A 107-amino-acid chain; its full sequence is Proteinase inhibitor 1 (107 aa).

Residues 1-23 (MELKFAHIIVFFLLATSFETLMA) form the signal peptide. The propeptide occupies 24–36 (RKESDGPEVIQLL).

Belongs to the protease inhibitor I13 (potato type I serine protease inhibitor) family.

The protein is Proteinase inhibitor 1 of Solanum tuberosum (Potato).